We begin with the raw amino-acid sequence, 201 residues long: MYDYIKGTVTTITPEYIVVEAGQIGYQIITGNPFSFQRLEGTEAQVFLYQHVREDNISLFGFQTTEERYLFKKLLSVSGIGPKSALAIIASGDVVPLISAIESEDDVYLTKFPSVGKKTARQIILDLKGKLADVVASEIVYVAPENDMVAGLSPQLEEAVLALEALGYSTRELKKVIPKLAKEADLTSDAYIKLALQLMTK.

A domain I region spans residues 1–63 (MYDYIKGTVT…EDNISLFGFQ (63 aa)). The segment at 64–142 (TTEERYLFKK…DVVASEIVYV (79 aa)) is domain II. The tract at residues 143–153 (APENDMVAGLS) is flexible linker. A domain III region spans residues 153-201 (SPQLEEAVLALEALGYSTRELKKVIPKLAKEADLTSDAYIKLALQLMTK).

Belongs to the RuvA family. Homotetramer. Forms an RuvA(8)-RuvB(12)-Holliday junction (HJ) complex. HJ DNA is sandwiched between 2 RuvA tetramers; dsDNA enters through RuvA and exits via RuvB. An RuvB hexamer assembles on each DNA strand where it exits the tetramer. Each RuvB hexamer is contacted by two RuvA subunits (via domain III) on 2 adjacent RuvB subunits; this complex drives branch migration. In the full resolvosome a probable DNA-RuvA(4)-RuvB(12)-RuvC(2) complex forms which resolves the HJ.

Its subcellular location is the cytoplasm. Its function is as follows. The RuvA-RuvB-RuvC complex processes Holliday junction (HJ) DNA during genetic recombination and DNA repair, while the RuvA-RuvB complex plays an important role in the rescue of blocked DNA replication forks via replication fork reversal (RFR). RuvA specifically binds to HJ cruciform DNA, conferring on it an open structure. The RuvB hexamer acts as an ATP-dependent pump, pulling dsDNA into and through the RuvAB complex. HJ branch migration allows RuvC to scan DNA until it finds its consensus sequence, where it cleaves and resolves the cruciform DNA. This chain is Holliday junction branch migration complex subunit RuvA, found in Listeria monocytogenes serovar 1/2a (strain ATCC BAA-679 / EGD-e).